The following is a 375-amino-acid chain: Succinyl-diaminopimelate desuccinylase (375 aa).

His-66 lines the Zn(2+) pocket. Residue Asp-68 is part of the active site. Residue Asp-99 participates in Zn(2+) binding. The active-site Proton acceptor is the Glu-133. Residues Glu-134, Glu-162, and His-348 each contribute to the Zn(2+) site.

It belongs to the peptidase M20A family. DapE subfamily. In terms of assembly, homodimer. Requires Zn(2+) as cofactor. It depends on Co(2+) as a cofactor.

It carries out the reaction N-succinyl-(2S,6S)-2,6-diaminopimelate + H2O = (2S,6S)-2,6-diaminopimelate + succinate. It functions in the pathway amino-acid biosynthesis; L-lysine biosynthesis via DAP pathway; LL-2,6-diaminopimelate from (S)-tetrahydrodipicolinate (succinylase route): step 3/3. Functionally, catalyzes the hydrolysis of N-succinyl-L,L-diaminopimelic acid (SDAP), forming succinate and LL-2,6-diaminopimelate (DAP), an intermediate involved in the bacterial biosynthesis of lysine and meso-diaminopimelic acid, an essential component of bacterial cell walls. In Salmonella agona (strain SL483), this protein is Succinyl-diaminopimelate desuccinylase.